A 329-amino-acid polypeptide reads, in one-letter code: Tryptophan--tRNA ligase (329 aa).

ATP is bound by residues 9-11 and 17-18; these read QPS and GN. The short motif at 10–18 is the 'HIGH' region element; the sequence is PSGTITLGN. D132 provides a ligand contact to L-tryptophan. ATP-binding positions include 144–146, V183, and 192–196; these read GDD and KMSKS. Positions 192-196 match the 'KMSKS' region motif; that stretch reads KMSKS.

It belongs to the class-I aminoacyl-tRNA synthetase family. As to quaternary structure, homodimer.

It is found in the cytoplasm. It catalyses the reaction tRNA(Trp) + L-tryptophan + ATP = L-tryptophyl-tRNA(Trp) + AMP + diphosphate + H(+). Catalyzes the attachment of tryptophan to tRNA(Trp). The sequence is that of Tryptophan--tRNA ligase from Bacillus anthracis.